The sequence spans 196 residues: PRADC1-like protein (196 aa).

An N-terminal signal peptide occupies residues 1-18; sequence MLIAWLVLAATLSRSIRA. The PA domain maps to 73–171; sequence ITDPPGACQE…STLQRLKRVH (99 aa). Asn179 carries an N-linked (GlcNAc...) asparagine glycan.

It localises to the secreted. May be involved in iversification of muscle cell fates. This Drosophila melanogaster (Fruit fly) protein is PRADC1-like protein.